We begin with the raw amino-acid sequence, 292 residues long: uncharacterized protein (292 aa).

It is found in the virion. This is an uncharacterized protein from Acanthamoeba polyphaga (Amoeba).